Reading from the N-terminus, the 21-residue chain is Agglutinin beta-2 chain (21 aa).

Residues 1 to 10 (NEQSGKSQTV) show a composition bias toward polar residues. A disordered region spans residues 1-21 (NEQSGKSQTVIVGPWGAQVST).

This sequence belongs to the jacalin lectin family. As to quaternary structure, tetramer of four alpha chains associated with two or four beta chains.

D-galactose-specific lectin, binds the T-antigen structure Gal-beta1,3-GalNAc (Thomsen-Friedenreich-antigen-specific lectin). Potent and selective stimulant of distinct T- and B-cell functions. Shows a unique ability to specifically recognize IgA-1 from human serum. This chain is Agglutinin beta-2 chain, found in Artocarpus integer (Jack fruit).